The chain runs to 159 residues: Phosphopantetheine adenylyltransferase (159 aa).

Substrate is bound at residue Ser8. Residues Ser8–Phe9 and His16 contribute to the ATP site. The substrate site is built by Lys40, Leu73, and Lys87. ATP is bound by residues Gly88–Arg90, Glu98, and Tyr122–Thr128.

This sequence belongs to the bacterial CoaD family. In terms of assembly, homohexamer. Mg(2+) serves as cofactor.

The protein resides in the cytoplasm. It catalyses the reaction (R)-4'-phosphopantetheine + ATP + H(+) = 3'-dephospho-CoA + diphosphate. It participates in cofactor biosynthesis; coenzyme A biosynthesis; CoA from (R)-pantothenate: step 4/5. Functionally, reversibly transfers an adenylyl group from ATP to 4'-phosphopantetheine, yielding dephospho-CoA (dPCoA) and pyrophosphate. In Corynebacterium efficiens (strain DSM 44549 / YS-314 / AJ 12310 / JCM 11189 / NBRC 100395), this protein is Phosphopantetheine adenylyltransferase.